The chain runs to 292 residues: ATP synthase gamma chain (292 aa).

Belongs to the ATPase gamma chain family. F-type ATPases have 2 components, CF(1) - the catalytic core - and CF(0) - the membrane proton channel. CF(1) has five subunits: alpha(3), beta(3), gamma(1), delta(1), epsilon(1). CF(0) has three main subunits: a, b and c.

Its subcellular location is the cell membrane. Functionally, produces ATP from ADP in the presence of a proton gradient across the membrane. The gamma chain is believed to be important in regulating ATPase activity and the flow of protons through the CF(0) complex. The polypeptide is ATP synthase gamma chain (Streptococcus pneumoniae serotype 2 (strain D39 / NCTC 7466)).